The chain runs to 109 residues: MAEMVARLASERAVVVFTKSGCCMCTAVTTLLGELAVSAAVHELDRDPLGKEMEKELARRLYGSSGRGGPAVPAVFIGGSLVGGTSKVMAMHLKGELVPLLKSAGALWL.

The 107-residue stretch at 2-108 folds into the Glutaredoxin domain; it reads AEMVARLASE…PLLKSAGALW (107 aa). Cys-22 and Cys-25 are disulfide-bonded. A Responsive for interaction with TGA factors motif is present at residues 106-109; the sequence is ALWL.

Belongs to the glutaredoxin family. CC-type subfamily.

The protein localises to the cytoplasm. Its subcellular location is the nucleus. Its function is as follows. Has a glutathione-disulfide oxidoreductase activity in the presence of NADPH and glutathione reductase. Reduces low molecular weight disulfides and proteins. In Oryza sativa subsp. japonica (Rice), this protein is Putative glutaredoxin-C11 (GRXC11).